Consider the following 328-residue polypeptide: MIEKIWFDNHFLGKLLWPLLWPLSYLFKWIATKRKSDYQSGKKQSYRSSVPVVVVGNITAGGNGKTPVVVWLVEQLQSKGYKVGVASRGYGGKAPHYPYLLTETTTPDISGDEPVLIKQRTKAEVAVAPVRSEAVKMLEQQGVDFIITDDGLQHYALQRDIEFIVIDGKRRFGNQHYIPLGPLREGVERLSSVDFLICNGGESQENEVSMRLQPSEAINLVTGERRSVSSLSNLVAFAGIGHPPRFFETLNQLKANVVHTQGFEDHKAFEPTEIEQLMQYGEQLIMTEKDAVKCQSFAQSSWWYLPVDATFPKEKAQQILNKIIEVKE.

59-66 (TAGGNGKT) lines the ATP pocket.

Belongs to the LpxK family.

The catalysed reaction is a lipid A disaccharide + ATP = a lipid IVA + ADP + H(+). Its pathway is glycolipid biosynthesis; lipid IV(A) biosynthesis; lipid IV(A) from (3R)-3-hydroxytetradecanoyl-[acyl-carrier-protein] and UDP-N-acetyl-alpha-D-glucosamine: step 6/6. Functionally, transfers the gamma-phosphate of ATP to the 4'-position of a tetraacyldisaccharide 1-phosphate intermediate (termed DS-1-P) to form tetraacyldisaccharide 1,4'-bis-phosphate (lipid IVA). The chain is Tetraacyldisaccharide 4'-kinase from Aliivibrio fischeri (strain ATCC 700601 / ES114) (Vibrio fischeri).